Reading from the N-terminus, the 99-residue chain is Large ribosomal subunit protein eL30 (99 aa).

It belongs to the eukaryotic ribosomal protein eL30 family. Part of the 50S ribosomal subunit.

The polypeptide is Large ribosomal subunit protein eL30 (Pyrococcus furiosus (strain ATCC 43587 / DSM 3638 / JCM 8422 / Vc1)).